The chain runs to 170 residues: uncharacterized protein (170 aa).

Residues 7-27 (LVELLIGLAIISIALNFAVPL) traverse the membrane as a helical segment.

It is found in the membrane. This is an uncharacterized protein from Haemophilus influenzae (strain ATCC 51907 / DSM 11121 / KW20 / Rd).